The chain runs to 160 residues: Small ribosomal subunit protein uS7B (160 aa).

This sequence belongs to the universal ribosomal protein uS7 family. Part of the 30S ribosomal subunit. Contacts proteins S9 and S11.

One of the primary rRNA binding proteins, it binds directly to 16S rRNA where it nucleates assembly of the head domain of the 30S subunit. Is located at the subunit interface close to the decoding center, probably blocks exit of the E-site tRNA. This Aquifex aeolicus (strain VF5) protein is Small ribosomal subunit protein uS7B.